We begin with the raw amino-acid sequence, 275 residues long: Trypsin-3 (275 aa).

Residues 1 to 22 (MISNKIAILLAVLVVAVACAQA) form the signal peptide. A propeptide spans 23–48 (RVALKHRSVQALPRFLPRPKYDVGHR) (activation peptide). The region spanning 49–274 (IVGGFEIDVS…VRDWVRENSG (226 aa)) is the Peptidase S1 domain. A disulfide bond links Cys74 and Cys90. Active-site charge relay system residues include His89 and Asp134. 2 cysteine pairs are disulfide-bonded: Cys199–Cys215 and Cys226–Cys250. Ser230 functions as the Charge relay system in the catalytic mechanism.

It belongs to the peptidase S1 family. In terms of tissue distribution, expressed in the midgut. Expression levels drop a few hours after blood feeding and pick up again 28 hours later.

The protein resides in the secreted. It catalyses the reaction Preferential cleavage: Arg-|-Xaa, Lys-|-Xaa.. In terms of biological role, constitutive trypsin that is expressed 2 days after emergence, coinciding with host seeking behavior of the female. In Anopheles gambiae (African malaria mosquito), this protein is Trypsin-3 (TRYP3).